Consider the following 304-residue polypeptide: Cell surface-binding protein OPG105 (304 aa).

The Alpha-carbonic anhydrase domain occupies 1 to 235 (MPQQLSPINI…NDDTQVYYSG (235 aa)). At 1 to 275 (MPQQLSPINI…YQKYIEGNKT (275 aa)) the chain is on the virion surface side. The chain crosses the membrane as a helical span at residues 276–294 (FAIIAIVFVFILTAILFLM). Topologically, residues 295 to 304 (SRRYSREKQN) are intravirion.

Belongs to the alpha-carbonic anhydrase family. Homodimer; disulfide-linked. Post-translationally, apparently non-glycosylated.

It localises to the virion membrane. Its function is as follows. Binds to chondroitin sulfate on the cell surface to provide virion attachment to target cell. This is Cell surface-binding protein OPG105 (OPG105) from Rabbitpox virus (strain Utrecht) (RPV).